Here is a 410-residue protein sequence, read N- to C-terminus: Peptidase T (410 aa).

Position 79 (H79) interacts with Zn(2+). D81 is an active-site residue. D142 contributes to the Zn(2+) binding site. Catalysis depends on E176, which acts as the Proton acceptor. Positions 177, 199, and 381 each coordinate Zn(2+).

It belongs to the peptidase M20B family. Zn(2+) serves as cofactor.

The protein resides in the cytoplasm. It carries out the reaction Release of the N-terminal residue from a tripeptide.. Functionally, cleaves the N-terminal amino acid of tripeptides. The protein is Peptidase T (pepT) of Bacillus subtilis (strain 168).